The sequence spans 403 residues: MAESVERLLQRVEELEQELARERSRRIAGDGHCGRTRIQKMSDEVVDSNPYSRLMALKRMGVVSDYEKIRTYAVAIVGVGGVGSVTAEMLTRCGIGKLLLFDYDKVELANMNRLFFQPYQAGMSKVQAAEHTLRSINPDVLFEVHNYNITTVEHFEHFMNRISNGGLEEGQPVDLVLSCVDNFEARMAINTACNELGQTWMESGVSENAVSGHIQLMVPGESACFACAPPLVVASNIDEKTLKREGVCAASLPTTMGVVAGILVQNVLKFLLKFGTVSFYLGYNAMQDFFPTMFMKPNPQCDDKNCRKQQEEYKKRAPAQPTQETAPQEEEEVVHEDNEWGIELVSEVSEEELKNSSGPVPTLPEGITVAYTVPKKREDSVSEVTVEDSGESLEDLMARMKKM.

Positions 81, 102, 125, 148, and 182 each coordinate ATP. Zn(2+)-binding residues include cysteine 224 and cysteine 227. Residue cysteine 248 is the Glycyl thioester intermediate of the active site. Zn(2+)-binding residues include cysteine 301 and cysteine 306. Residues 306–315 show a composition bias toward basic and acidic residues; sequence CRKQQEEYKK. Residues 306 to 337 form a disordered region; that stretch reads CRKQQEEYKKRAPAQPTQETAPQEEEEVVHED. A UFM1-interacting sequence (UIS) motif is present at residues 333–345; it reads VVHEDNEWGIELV. Residues 346-376 form a linker region; that stretch reads SEVSEEELKNSSGPVPTLPEGITVAYTVPKK. Residues serine 357 and serine 392 each carry the phosphoserine modification. Positions 388 to 403 match the UFC1-binding sequence (UFC) motif; the sequence is DSGESLEDLMARMKKM.

It belongs to the ubiquitin-activating E1 family. UBA5 subfamily. Homodimer; homodimerization is required for UFM1 activation. Interacts (via UIS motif) with UFM1; binds UFM1 via a trans-binding mechanism in which UFM1 interacts with distinct sites in both subunits of the UBA5 homodimer. Interacts (via C-terminus) with UFC1. Interacts (via UIS motif) with GABARAPL2 and, with lower affinity, with GABARAP and GABARAPL1.

It localises to the cytoplasm. The protein localises to the nucleus. Its subcellular location is the endoplasmic reticulum membrane. It is found in the golgi apparatus. E1-like enzyme which specifically catalyzes the first step in ufmylation. Activates UFM1 by first adenylating its C-terminal glycine residue with ATP, and thereafter linking this residue to the side chain of a cysteine residue in E1, yielding a UFM1-E1 thioester and free AMP. Activates UFM1 via a trans-binding mechanism, in which UFM1 interacts with distinct sites in both subunits of the UBA5 homodimer. Trans-binding also promotes stabilization of the UBA5 homodimer, and enhances ATP-binding. Transfer of UFM1 from UBA5 to the E2-like enzyme UFC1 also takes place using a trans mechanism. Ufmylation plays a key role in various processes, such as ribosome recycling, response to DNA damage, interferon response or reticulophagy (also called ER-phagy). Ufmylation is essential for erythroid differentiation of both megakaryocytes and erythrocytes. The protein is Ubiquitin-like modifier-activating enzyme 5 of Rattus norvegicus (Rat).